Here is an 839-residue protein sequence, read N- to C-terminus: Taste receptor type 1 member 2 (839 aa).

Residues Met-1 to Ala-19 form the signal peptide. Residues Glu-20–Thr-566 are Extracellular-facing. N-linked (GlcNAc...) asparagine glycans are attached at residues Asn-84, Asn-127, Asn-248, Asn-292, Asn-312, Asn-368, Asn-428, Asn-487, and Asn-527. Residues Ile-567–Phe-587 traverse the membrane as a helical segment. Residues Trp-588 to Pro-602 are Cytoplasmic-facing. A helical transmembrane segment spans residues Met-603–Gly-623. Residues Pro-624 to Ala-635 are Extracellular-facing. The chain crosses the membrane as a helical span at residues Leu-636–Val-656. At Cys-657 to Ser-681 the chain is on the cytoplasmic side. The helical transmembrane segment at Met-682–Leu-702 threads the bilayer. Topologically, residues Asn-703–Ser-727 are extracellular. A helical transmembrane segment spans residues Leu-728–Met-748. Topologically, residues Gly-749–Lys-760 are cytoplasmic. The helical transmembrane segment at Phe-761–Ser-781 threads the bilayer. The Extracellular segment spans residues Ala-782–Asn-784. The chain crosses the membrane as a helical span at residues Gly-785–Leu-805. Residues Gly-806–Asp-839 are Cytoplasmic-facing.

It belongs to the G-protein coupled receptor 3 family. TAS1R subfamily. As to quaternary structure, forms heterodimers with TAS1R3.

It is found in the cell membrane. Putative taste receptor. TAS1R2/TAS1R3 recognizes diverse natural and synthetic sweeteners. The chain is Taste receptor type 1 member 2 (TAS1R2) from Macaca mulatta (Rhesus macaque).